Reading from the N-terminus, the 145-residue chain is Globin (145 aa).

S2 carries the post-translational modification N-acetylserine. One can recognise a Globin domain in the interval 2–145; that stretch reads SLSAAEADLV…IVAALKAAGK (144 aa). H96 is a binding site for heme b.

This sequence belongs to the globin family. Monomer.

This chain is Globin, found in Aplysia kurodai (Kuroda's sea hare).